The sequence spans 258 residues: 5-oxoprolinase subunit A (258 aa).

This sequence belongs to the LamB/PxpA family. In terms of assembly, forms a complex composed of PxpA, PxpB and PxpC.

It carries out the reaction 5-oxo-L-proline + ATP + 2 H2O = L-glutamate + ADP + phosphate + H(+). Functionally, catalyzes the cleavage of 5-oxoproline to form L-glutamate coupled to the hydrolysis of ATP to ADP and inorganic phosphate. The chain is 5-oxoprolinase subunit A from Corynebacterium jeikeium (strain K411).